The sequence spans 173 residues: Calcium-binding protein 5 (173 aa).

4 consecutive EF-hand domains span residues 28-63 (DEIEELREAFLEFDKDRDGFISCKDLGNLMRTMGYM), 82-99 (GRVDFDDFVELMTPKLLA), 105-140 (IGVQEMRDAFKEFDTNGDGEITLVELQQAMQRLLGE), and 142-173 (LTPREISEVVREADVNGDGTVDFEEFVKMMSR). Residues Asp-41, Asp-43, Asp-45, and Asp-52 each contribute to the Ca(2+) site. Residues Asp-118, Asn-120, Asp-122, Glu-124, Glu-129, Asp-155, Asn-157, Asp-159, Thr-161, and Glu-166 each coordinate Ca(2+).

As to quaternary structure, interacts with CACNA1C (via C-terminal CDB motif) in a calcium-dependent manner. Interacts with STXBP1. Interacts with MYO6. Retina.

It localises to the cytoplasm. In terms of biological role, inhibits calcium-dependent inactivation of L-type calcium channel and shifts voltage dependence of activation to more depolarized membrane potentials. Involved in the transmission of light signals. May positively regulate neurotransmitter vesicle endocytosis and exocytosis in a salt-dependent manner. May play a role in the extension and network organization of neurites. The chain is Calcium-binding protein 5 (CABP5) from Homo sapiens (Human).